A 345-amino-acid polypeptide reads, in one-letter code: N-acetyl-gamma-glutamyl-phosphate reductase (345 aa).

Cys-149 is an active-site residue.

This sequence belongs to the NAGSA dehydrogenase family. Type 1 subfamily.

It localises to the cytoplasm. It carries out the reaction N-acetyl-L-glutamate 5-semialdehyde + phosphate + NADP(+) = N-acetyl-L-glutamyl 5-phosphate + NADPH + H(+). The protein operates within amino-acid biosynthesis; L-arginine biosynthesis; N(2)-acetyl-L-ornithine from L-glutamate: step 3/4. Catalyzes the NADPH-dependent reduction of N-acetyl-5-glutamyl phosphate to yield N-acetyl-L-glutamate 5-semialdehyde. The sequence is that of N-acetyl-gamma-glutamyl-phosphate reductase from Herminiimonas arsenicoxydans.